We begin with the raw amino-acid sequence, 578 residues long: Kelch-like protein 30 (578 aa).

A BTB domain is found at 33–100 (ADVTLLVGGR…VYTGRLTITQ (68 aa)). A BACK domain is found at 153–255 (KAWAFLRENF…EACRAALSQG (103 aa)). Kelch repeat units follow at residues 270 to 326 (VLVV…ALNN), 327 to 377 (NIYV…ALNG), 378 to 422 (EIYV…GCRG), 424 to 471 (LYLV…ALHG), 473 to 513 (LYLI…PLGD), and 514 to 563 (ALYV…TVFL).

In Homo sapiens (Human), this protein is Kelch-like protein 30 (KLHL30).